The sequence spans 395 residues: NAD(P)H-quinone oxidoreductase subunit H, chloroplastic (395 aa).

It belongs to the complex I 49 kDa subunit family. In terms of assembly, NDH is composed of at least 16 different subunits, 5 of which are encoded in the nucleus.

It localises to the plastid. It is found in the chloroplast thylakoid membrane. The enzyme catalyses a plastoquinone + NADH + (n+1) H(+)(in) = a plastoquinol + NAD(+) + n H(+)(out). It carries out the reaction a plastoquinone + NADPH + (n+1) H(+)(in) = a plastoquinol + NADP(+) + n H(+)(out). Functionally, NDH shuttles electrons from NAD(P)H:plastoquinone, via FMN and iron-sulfur (Fe-S) centers, to quinones in the photosynthetic chain and possibly in a chloroplast respiratory chain. The immediate electron acceptor for the enzyme in this species is believed to be plastoquinone. Couples the redox reaction to proton translocation, and thus conserves the redox energy in a proton gradient. The sequence is that of NAD(P)H-quinone oxidoreductase subunit H, chloroplastic from Citrus sinensis (Sweet orange).